A 462-amino-acid polypeptide reads, in one-letter code: ATP synthase subunit beta (462 aa).

Position 152-159 (152-159) interacts with ATP; the sequence is GGAGVGKT.

The protein belongs to the ATPase alpha/beta chains family. F-type ATPases have 2 components, CF(1) - the catalytic core - and CF(0) - the membrane proton channel. CF(1) has five subunits: alpha(3), beta(3), gamma(1), delta(1), epsilon(1). CF(0) has three main subunits: a(1), b(2) and c(9-12). The alpha and beta chains form an alternating ring which encloses part of the gamma chain. CF(1) is attached to CF(0) by a central stalk formed by the gamma and epsilon chains, while a peripheral stalk is formed by the delta and b chains.

Its subcellular location is the cell inner membrane. It catalyses the reaction ATP + H2O + 4 H(+)(in) = ADP + phosphate + 5 H(+)(out). Functionally, produces ATP from ADP in the presence of a proton gradient across the membrane. The catalytic sites are hosted primarily by the beta subunits. This Shewanella amazonensis (strain ATCC BAA-1098 / SB2B) protein is ATP synthase subunit beta.